Here is a 20-residue protein sequence, read N- to C-terminus: Cytochrome P450IIB (20 aa).

The protein belongs to the cytochrome P450 family. Heme serves as cofactor.

Its subcellular location is the endoplasmic reticulum membrane. The protein resides in the microsome membrane. The enzyme catalyses an organic molecule + reduced [NADPH--hemoprotein reductase] + O2 = an alcohol + oxidized [NADPH--hemoprotein reductase] + H2O + H(+). Cytochromes P450 are a group of heme-thiolate monooxygenases. In liver microsomes, this enzyme is involved in an NADPH-dependent electron transport pathway. This isozyme is active upon P.nitroanisole, aniline, D-benzphetamine, delta(9)-tetrahydrocannabinol (THC) and strychnine. This Cavia porcellus (Guinea pig) protein is Cytochrome P450IIB.